Here is a 517-residue protein sequence, read N- to C-terminus: Serine carboxypeptidase ctsa-3.2 (517 aa).

A signal peptide spans 1–21 (MWWTSLVFSVLLFDLIFISNC). Residue Ser172 is part of the active site. The N-linked (GlcNAc...) asparagine glycan is linked to Asn269. Active-site residues include Asp418 and His485.

The protein belongs to the peptidase S10 family.

The chain is Serine carboxypeptidase ctsa-3.2 from Caenorhabditis elegans.